Here is a 380-residue protein sequence, read N- to C-terminus: Calreticulin-3 (380 aa).

A signal peptide spans 1-19; it reads MVSARALLWAICVLRVALA. The tract at residues 20–197 is N-domain; that stretch reads TVYFQEEFLD…GQSIESGSIE (178 aa). A glycan (N-linked (GlcNAc...) asparagine) is linked at Asn-42. Tyr-109, Lys-111, Tyr-128, and Asp-135 together coordinate an alpha-D-glucoside. Cys-137 and Cys-163 form a disulfide bridge. A run of 7 repeats spans residues 191–202, 209–220, 222–231, 235–246, 250–256, 260–268, and 270–280. The 4 X approximate repeats stretch occupies residues 191-246; that stretch reads IESGSIEYDWNLTSLRKTEKTSLDSRDWDQVEGSKVQDWEKHFLDAGASKPSDWNS. A P-domain region spans residues 198–291; it reads YDWNLTSLRK…YLTQYDLSEF (94 aa). N-linked (GlcNAc...) asparagine glycosylation occurs at Asn-201. The 3 X approximate repeats stretch occupies residues 250–280; the sequence is GDWLQKPPYEDGLKAEGIDKDVWLHQKMRPA. Residues 292-380 form a C-domain region; it reads ENIGAIGLEL…FSRFHRQGEL (89 aa). Glu-300 is an an alpha-D-glucoside binding site. The Prevents secretion from ER motif lies at 377–380; that stretch reads QGEL.

Belongs to the calreticulin family. In terms of assembly, component of an EIF2 complex at least composed of CELF1/CUGBP1, CALR, CALR3, EIF2S1, EIF2S2, HSP90B1 and HSPA5. In terms of tissue distribution, testis specific, absent in mature sperm.

It localises to the endoplasmic reticulum lumen. Functionally, CALR3 capacity for calcium-binding may be absent or much lower than that of CALR. During spermatogenesis, may act as a lectin-independent chaperone for specific client proteins such as ADAM3. Required for sperm fertility. The polypeptide is Calreticulin-3 (Calr3) (Mus musculus (Mouse)).